A 618-amino-acid chain; its full sequence is 1-deoxy-D-xylulose-5-phosphate synthase (618 aa).

Thiamine diphosphate contacts are provided by residues H70 and 111-113 (GHS). D142 contacts Mg(2+). Thiamine diphosphate-binding positions include 143-144 (GS), N171, Y278, and E360. A Mg(2+)-binding site is contributed by N171.

It belongs to the transketolase family. DXPS subfamily. As to quaternary structure, homodimer. It depends on Mg(2+) as a cofactor. Thiamine diphosphate is required as a cofactor.

It catalyses the reaction D-glyceraldehyde 3-phosphate + pyruvate + H(+) = 1-deoxy-D-xylulose 5-phosphate + CO2. It functions in the pathway metabolic intermediate biosynthesis; 1-deoxy-D-xylulose 5-phosphate biosynthesis; 1-deoxy-D-xylulose 5-phosphate from D-glyceraldehyde 3-phosphate and pyruvate: step 1/1. Catalyzes the acyloin condensation reaction between C atoms 2 and 3 of pyruvate and glyceraldehyde 3-phosphate to yield 1-deoxy-D-xylulose-5-phosphate (DXP). The chain is 1-deoxy-D-xylulose-5-phosphate synthase from Helicobacter pylori (strain J99 / ATCC 700824) (Campylobacter pylori J99).